The chain runs to 78 residues: Putative membrane protein insertion efficiency factor (78 aa).

Belongs to the UPF0161 family.

Its subcellular location is the cell inner membrane. Functionally, could be involved in insertion of integral membrane proteins into the membrane. In Prochlorococcus marinus (strain MIT 9301), this protein is Putative membrane protein insertion efficiency factor.